Reading from the N-terminus, the 403-residue chain is MLQILYLAQDLADPAVRRRTLTLVAGGARVTLAGFRRGDNPLAAIDGVEPIELGTTADGRFAQRIGAVARACLSLQRQLGHVRKPDVIIARNLEMLAVARRAVAFFGGTVPIVYECLDIHRLMLRKDIVGRMLRAAESQLGKDARLLITSSPAFIEHYFRPLSGIGAPPMLLENKVLEIDGTVERRTASPAKSPPPGAPWKIGWFGALRCRRSLALLAEFSRKMEGRFEIVLRGRPAYSEFDDFDGFVRNEPFMRFEGAYRNPEDLAEIYGEVHFTWAIDFFEEGQNSAWLLPNRLYEGCRHGRIPIAMKGTETARFLSVRSIGLVLEGADVESLATVLGPLTPNCYADAAERISRCNPGSWVFDRTDCEALVRQLATLTLQAPQTVPVVAMAGSSHKEGGFL.

The protein localises to the cytoplasm. It participates in glycan metabolism; exopolysaccharide biosynthesis. Essential for succinoglycan (EPS I) synthesis and nodule infection. Glycosyltransferase needed for the addition of the third sugar (glucose), catalyzes the formation of a beta-1,4 linkage between the second and third sugars. The protein is Succinoglycan biosynthesis protein ExoL (exoL) of Rhizobium meliloti (strain 1021) (Ensifer meliloti).